The primary structure comprises 1051 residues: SWI/SNF-related matrix-associated actin-dependent regulator of chromatin subfamily A member 5 (1051 aa).

Pro residues predominate over residues 1 to 15 (MSSAVEPPPPPPPES). The interval 1 to 81 (MSSAVEPPPP…IQEPDPTYEE (81 aa)) is disordered. At S2 the chain carries N-acetylserine. Positions 24–38 (GAGGSSSGNKGGPEG) are enriched in gly residues. Residues 39–53 (GAAPAAPCAAGSGPA) show a composition bias toward low complexity. Residue T55 is modified to Phosphothreonine. S65 carries the phosphoserine modification. The segment covering 68–81 (KQKEIQEPDPTYEE) has biased composition (basic and acidic residues). K82 participates in a covalent cross-link: Glycyl lysine isopeptide (Lys-Gly) (interchain with G-Cter in SUMO2). T112 carries the post-translational modification Phosphothreonine. A phosphoserine mark is found at S115, S136, and S170. The 166-residue stretch at 191-356 (ISLYENGING…WSLLNFLLPD (166 aa)) folds into the Helicase ATP-binding domain. Position 204–211 (204–211 (DEMGLGKT)) interacts with ATP. A DEAH box motif is present at residues 307–310 (DEAH). An N6-acetyllysine modification is found at K439. A Helicase C-terminal domain is found at 486-637 (VLDKLLPKLK…SIVIQQGRLV (152 aa)). Glycyl lysine isopeptide (Lys-Gly) (interchain with G-Cter in SUMO2) cross-links involve residues K643, K646, K693, K721, and K734. Position 754 is a phosphoserine (S754). SANT domains lie at 839-891 (QGFT…ERCN) and 942-1006 (KGKN…LITL). A Glycyl lysine isopeptide (Lys-Gly) (interchain with G-Cter in SUMO2) cross-link involves residue K965. A disordered region spans residues 1014 to 1051 (LEEKEKAEKKKRGPKPSTQKRKMDGAPDGRGRKKKLKL). The span at 1022-1033 (KKKRGPKPSTQK) shows a compositional bias: basic residues. Positions 1034 to 1043 (RKMDGAPDGR) are enriched in basic and acidic residues.

This sequence belongs to the SNF2/RAD54 helicase family. ISWI subfamily. As to quaternary structure, component of the ACF-5 ISWI chromatin-remodeling complex (also called the ACF/WCRF complex) at least composed of SMARCA5/SNF2H and BAZ1A/ACF1, which regulates the spacing of histone octamers on the DNA template to facilitate access to DNA. Within the complex interacts with BAZ1A/ACF1; the interaction is direct and is required to slide nucleosomes from end to center positions on a DNA template in an ATP-dependent manner. Component of the CHRAC ISWI chromatin-remodeling complex at least composed of SMARCA5/SNF2H, BAZ1A/ACF1, CHRAC1 and POLE3; the complex preferentially binds DNA through the CHRAC1-POLE3 heterodimer and possesses ATP-dependent nucleosome-remodeling activity. Within the complex interacts with BAZ1A/ACF1; the interaction is direct and promotes the interaction with the POLE3-CHRAC1 heterodimer. Within the complex interacts with the POLE3-CHRAC1 heterodimer; the interaction is direct and enhances nucleosome sliding activity by the SMARCA5/SNF2H and BAZ1A/ACF1 interaction. Neither POLE3 nor CHRAC1 enhances nucleosome sliding activity of the ACF-5 ISWI chromatin remodeling complex. Component of the WICH-5 ISWI chromatin-remodeling complex (also called the WICH complex) at least composed of SMARCA5/SNF2H and BAZ1B/WSTF, which regulates the spacing of histone octamers on the DNA template to facilitate access to DNA. Within the complex interacts with BAZ1B/WSTF. Component of the NoRC-5 ISWI chromatin-remodeling complex (also called the NoRC chromatin-remodeling complex) at least composed of SMARCA5/SNF2H and BAZ2A/TIP5; the complex suppresses rDNA transcription by a combination of nucleosome remodeling, histone deacetylation, and DNA methylation. Within the complex interacts with BAZ2A/TIP5. Within the complex interacts with HDAC1. Component of the BRF-5 ISWI chromatin-remodeling complex at least composed of SMARCA5/SNF2H and BAZ2B. Within the complex interacts with BAZ2B. Component of the NURF-5 ISWI chromatin-remodeling complex at least composed of SMARCA5/SNF2H and BPTF. Within the complex interacts with BPFT. Component of the CERF-5 ISWI chromatin-remodeling complex at least composed of SMARCA5/SNF2H and CECR2. LUZP1 is detected as part of the CERF-5 complex in embryonic stem cells where it is involved in complex stabilization but is not detected in the complex in the testis. Component of the RSF-5 ISWI chromatin-remodeling complex (also called the RSF complex) at least composed of SMARCA5/SNF2H and RSF1. Within the complex interacts with RSF1. Interacts with the cohesin complex component RAD21; the interaction is direct. Interacts with the NuRD complex components HDAC2, RBBP4 and CHD4; the interactions are direct. Interacts with PCNA. Component of the B-WICH complex, at least composed of SMARCA5/SNF2H, BAZ1B/WSTF, SF3B1, DEK, MYO1C, ERCC6, MYBBP1A and DDX21 which positively regulates RNA polymerase III transcription. Interacts with MYO1C. Interacts with BEND3. Interacts with SIRT6; promoting recruitment to DNA damage sites. In terms of tissue distribution, ubiquitously expressed.

It localises to the nucleus. Its subcellular location is the chromosome. It carries out the reaction ATP + H2O = ADP + phosphate + H(+). Its function is as follows. ATPase that possesses intrinsic ATP-dependent nucleosome-remodeling activity. Catalytic subunit of ISWI chromatin-remodeling complexes, which form ordered nucleosome arrays on chromatin and facilitate access to DNA during DNA-templated processes such as DNA replication, transcription, and repair; this may require intact histone H4 tails. Within the ISWI chromatin-remodeling complexes, slides edge- and center-positioned histone octamers away from their original location on the DNA template. Catalytic activity and histone octamer sliding propensity is regulated and determined by components of the ISWI chromatin-remodeling complexes. The BAZ1A/ACF1-, BAZ1B/WSTF-, BAZ2A/TIP5- and BAZ2B-containing ISWI chromatin-remodeling complexes regulate the spacing of nucleosomes along the chromatin and have the ability to slide mononucleosomes to the center of a DNA template in an ATP-dependent manner. The CECR2- and RSF1-containing ISWI chromatin-remodeling complexes do not have the ability to slide mononucleosomes to the center of a DNA template. Binds to core histones together with RSF1, and is required for the assembly of regular nucleosome arrays by the RSF-5 ISWI chromatin-remodeling complex. Involved in DNA replication and together with BAZ1A/ACF1 is required for replication of pericentric heterochromatin in S-phase. Probably plays a role in repression of RNA polymerase I dependent transcription of the rDNA locus, through the recruitment of the SIN3/HDAC1 corepressor complex to the rDNA promoter. The WICH-5 ISWI chromatin-remodeling complex regulates the transcription of various genes, has a role in RNA polymerase I and RNA polymerase III transcription, mediates the histone H2AX phosphorylation at 'Tyr-142', and is involved in the maintenance of chromatin structures during DNA replication processes. Essential component of the NoRC-5 ISWI chromatin-remodeling complex, a complex that mediates silencing of a fraction of rDNA by recruiting histone-modifying enzymes and DNA methyltransferases, leading to heterochromatin formation and transcriptional silencing. Required for embryonic development and differentiation, and the proliferation of early blastocyst-derived stem cells. The protein is SWI/SNF-related matrix-associated actin-dependent regulator of chromatin subfamily A member 5 (Smarca5) of Mus musculus (Mouse).